Here is a 323-residue protein sequence, read N- to C-terminus: Beta-ketoacyl-[acyl-carrier-protein] synthase III (323 aa).

Active-site residues include Cys113 and His250. An ACP-binding region spans residues 251–255 (QANRR). Asn280 is an active-site residue.

This sequence belongs to the thiolase-like superfamily. FabH family. As to quaternary structure, homodimer.

It is found in the cytoplasm. It carries out the reaction malonyl-[ACP] + acetyl-CoA + H(+) = 3-oxobutanoyl-[ACP] + CO2 + CoA. The protein operates within lipid metabolism; fatty acid biosynthesis. Its function is as follows. Catalyzes the condensation reaction of fatty acid synthesis by the addition to an acyl acceptor of two carbons from malonyl-ACP. Catalyzes the first condensation reaction which initiates fatty acid synthesis and may therefore play a role in governing the total rate of fatty acid production. Possesses both acetoacetyl-ACP synthase and acetyl transacylase activities. Its substrate specificity determines the biosynthesis of branched-chain and/or straight-chain of fatty acids. This Allorhizobium ampelinum (strain ATCC BAA-846 / DSM 112012 / S4) (Agrobacterium vitis (strain S4)) protein is Beta-ketoacyl-[acyl-carrier-protein] synthase III.